A 104-amino-acid chain; its full sequence is MNQYFTYILQCSDKTLYCGYTTDLEKRLATHNSGKGAKYTKTRLPVKLLASVDFDNKNDAMSCEWWFKHKLVRKQKLSLIKNDLIKEKFIEYLELKQKKNIHLK.

The 78-residue stretch at 2–79 folds into the GIY-YIG domain; the sequence is NQYFTYILQC…KLVRKQKLSL (78 aa).

It belongs to the UPF0213 family.

In Lactococcus lactis subsp. lactis (strain IL1403) (Streptococcus lactis), this protein is UPF0213 protein YsiG (ysiG).